Here is a 368-residue protein sequence, read N- to C-terminus: Histidinol-phosphate aminotransferase 1 (368 aa).

K224 is modified (N6-(pyridoxal phosphate)lysine).

It belongs to the class-II pyridoxal-phosphate-dependent aminotransferase family. Histidinol-phosphate aminotransferase subfamily. As to quaternary structure, homodimer. Pyridoxal 5'-phosphate serves as cofactor.

It carries out the reaction L-histidinol phosphate + 2-oxoglutarate = 3-(imidazol-4-yl)-2-oxopropyl phosphate + L-glutamate. It participates in amino-acid biosynthesis; L-histidine biosynthesis; L-histidine from 5-phospho-alpha-D-ribose 1-diphosphate: step 7/9. This Rhizobium meliloti (strain 1021) (Ensifer meliloti) protein is Histidinol-phosphate aminotransferase 1 (hisC1).